Here is a 149-residue protein sequence, read N- to C-terminus: Putative glycine cleavage system H protein 3 (149 aa).

A Lipoyl-binding domain is found at 39–121; that stretch reads TCTLGITKYA…EDKGWLIKME (83 aa). K80 is modified (N6-lipoyllysine).

The protein belongs to the GcvH family. As to quaternary structure, the glycine cleavage system is composed of four proteins: P, T, L and H. (R)-lipoate serves as cofactor.

In terms of biological role, the glycine cleavage system catalyzes the degradation of glycine. The H protein shuttles the methylamine group of glycine from the P protein to the T protein. This is Putative glycine cleavage system H protein 3 (gcvH3) from Dictyostelium discoideum (Social amoeba).